Here is a 288-residue protein sequence, read N- to C-terminus: Nucleotide-binding protein Gura_2968 (288 aa).

8-15 (GLSGSGKS) is an ATP binding site. 59-62 (DIRG) is a GTP binding site.

It belongs to the RapZ-like family.

Displays ATPase and GTPase activities. In Geotalea uraniireducens (strain Rf4) (Geobacter uraniireducens), this protein is Nucleotide-binding protein Gura_2968.